Consider the following 1262-residue polypeptide: Cytoplasmic FMR1-interacting protein homolog (1262 aa).

A disordered region spans residues 519 to 550 (LNRMTDVKGKKKSSAPKGDSANSSSSDIRIPR).

This sequence belongs to the CYFIP family. As to quaternary structure, interacts with gex-3.

The protein resides in the cytoplasm. In terms of biological role, required for initial steps of body morphogenesis. May play a role in egg laying and yolk protein clatherin-mediated endocytosis by oocytes during oogenesis. Plays a role in the formation of muscle connections, also called muscle arm extensions, between the body wall and the motor axons in the dorsal and ventral cord. The polypeptide is Cytoplasmic FMR1-interacting protein homolog (Caenorhabditis elegans).